The primary structure comprises 237 residues: Large ribosomal subunit protein uL2 (237 aa).

A compositionally biased stretch (polar residues) spans 1–11 (MGKRLISQNRG). Disordered stretches follow at residues 1-26 (MGKRLISQNRGRGTPKYRSPSHKRKG) and 204-237 (PYGGGRHQHLGKPSSVSRNTSPGRKVGHIASRRT). Composition is skewed to basic residues over residues 13 to 26 (GTPKYRSPSHKRKG) and 228 to 237 (KVGHIASRRT).

The protein belongs to the universal ribosomal protein uL2 family. Part of the 50S ribosomal subunit. Forms a bridge to the 30S subunit in the 70S ribosome.

Its function is as follows. One of the primary rRNA binding proteins. Required for association of the 30S and 50S subunits to form the 70S ribosome, for tRNA binding and peptide bond formation. It has been suggested to have peptidyltransferase activity; this is somewhat controversial. Makes several contacts with the 16S rRNA in the 70S ribosome. This is Large ribosomal subunit protein uL2 from Methanococcus vannielii.